The sequence spans 438 residues: chitinase-like effector (438 aa).

An N-terminal signal peptide occupies residues 1–23; it reads MFTPLSSVTALLALSSAFLGAQA. The GH18 domain maps to 54–437; sequence FIAKGYYTGW…DAIRSGAGLS (384 aa). Trp416 serves as a coordination point for chitin.

Belongs to the glycosyl hydrolase 18 family.

The protein localises to the secreted. Its function is as follows. Catalytically impaired chitinase that binds efficiently to chitin, but not to chitosan, xylan, or cellulose. Despite the lack of chitinolytic activity, retains substrate binding specificity and acts as an effector to prevent chitin-triggered immunity by sequestering immunogenic chitin fragments. Does not function in the protection of fungal cell wall against plant hydrolytic enzymes. The polypeptide is chitinase-like effector (Moniliophthora perniciosa (Witches'-broom disease fungus)).